Here is a 447-residue protein sequence, read N- to C-terminus: Argininosuccinate synthase (447 aa).

ATP-binding positions include 17–25 and Ala-43; that span reads AFSGGLDTS. Tyr-99 lines the L-citrulline pocket. Gly-129 and Thr-131 together coordinate ATP. 3 residues coordinate L-aspartate: Thr-131, Asn-135, and Asp-136. Asn-135 serves as a coordination point for L-citrulline. Asp-136 is an ATP binding site. Arg-139 and Ser-192 together coordinate L-citrulline. Asp-194 is a binding site for ATP. Residues Thr-201, Glu-203, and Glu-280 each contribute to the L-citrulline site.

This sequence belongs to the argininosuccinate synthase family. Type 2 subfamily. Homotetramer.

The protein localises to the cytoplasm. It carries out the reaction L-citrulline + L-aspartate + ATP = 2-(N(omega)-L-arginino)succinate + AMP + diphosphate + H(+). The protein operates within amino-acid biosynthesis; L-arginine biosynthesis; L-arginine from L-ornithine and carbamoyl phosphate: step 2/3. The polypeptide is Argininosuccinate synthase (Shigella boydii serotype 18 (strain CDC 3083-94 / BS512)).